The sequence spans 1008 residues: PAN2-PAN3 deadenylation complex catalytic subunit PAN2 (1008 aa).

WD repeat units follow at residues 29–68 (GQLT…PYSR), 110–149 (PSLG…VTRV), 158–198 (HMAG…FSDV), 200–236 (VQDN…AMAP), and 277–316 (AEVA…SFAE). Positions 314–449 (FAEFSAPTAF…TCTEASMSSK (136 aa)) are linker. The region spanning 450–755 (KVPRLYRKLE…RTVMMVYAVG (306 aa)) is the USP domain. The 169-residue stretch at 808–976 (AIDAEFVVLK…EDSHTALLLY (169 aa)) folds into the Exonuclease domain. 4 residues coordinate a divalent metal cation: D810, E812, D915, and D968.

This sequence belongs to the peptidase C19 family. PAN2 subfamily. As to quaternary structure, forms a heterotrimer with an asymmetric homodimer of the regulatory subunit PAN3 to form the poly(A)-nuclease (PAN) deadenylation complex. A divalent metal cation serves as cofactor.

It localises to the cytoplasm. It catalyses the reaction Exonucleolytic cleavage of poly(A) to 5'-AMP.. Positively regulated by the regulatory subunit PAN3. Its function is as follows. Catalytic subunit of the poly(A)-nuclease (PAN) deadenylation complex, one of two cytoplasmic mRNA deadenylases involved in mRNA turnover. PAN specifically shortens poly(A) tails of RNA and the activity is stimulated by poly(A)-binding protein PAB1. PAN deadenylation is followed by rapid degradation of the shortened mRNA tails by the CCR4-NOT complex. Deadenylated mRNAs are then degraded by two alternative mechanisms, namely exosome-mediated 3'-5' exonucleolytic degradation, or deadenylation-dependent mRNA decaping and subsequent 5'-3' exonucleolytic degradation by XRN1. May also be involved in post-transcriptional maturation of mRNA poly(A) tails. In Yarrowia lipolytica (strain CLIB 122 / E 150) (Yeast), this protein is PAN2-PAN3 deadenylation complex catalytic subunit PAN2.